Reading from the N-terminus, the 641-residue chain is Acetyl-coenzyme A synthetase (641 aa).

CoA is bound by residues R186–K189 and T304. ATP-binding positions include G380–P382, D404–T409, D493, and R508. S516 provides a ligand contact to CoA. R519 serves as a coordination point for ATP. Mg(2+) contacts are provided by V530, H532, and I535. K602 bears the N6-acetyllysine mark.

The protein belongs to the ATP-dependent AMP-binding enzyme family. Mg(2+) is required as a cofactor. In terms of processing, acetylated. Deacetylation by the SIR2-homolog deacetylase activates the enzyme.

It carries out the reaction acetate + ATP + CoA = acetyl-CoA + AMP + diphosphate. Catalyzes the conversion of acetate into acetyl-CoA (AcCoA), an essential intermediate at the junction of anabolic and catabolic pathways. AcsA undergoes a two-step reaction. In the first half reaction, AcsA combines acetate with ATP to form acetyl-adenylate (AcAMP) intermediate. In the second half reaction, it can then transfer the acetyl group from AcAMP to the sulfhydryl group of CoA, forming the product AcCoA. The protein is Acetyl-coenzyme A synthetase of Gamma-proteobacterium EBAC31A08.